Reading from the N-terminus, the 454-residue chain is Nucleoprotein (454 aa).

The segment at 1 to 62 (MSFVPGQENA…ATTQPNTGSV (62 aa)) is disordered. Residues 9–23 (NAGSRSSSGNRAGNG) show a composition bias toward low complexity. Polar residues predominate over residues 49-61 (PKQTATTQPNTGS). The interval 56–197 (QPNTGSVVPH…GFYVEGSGRS (142 aa)) is RNA-binding. In terms of domain architecture, CoV N NTD spans 64–193 (PHYSWFSGIT…VLPQGFYVEG (130 aa)). Residues R109, R125, and R167 each contribute to the RNA site. S170 is subject to Phosphoserine; by host. T177 bears the Phosphothreonine; by host mark. Disordered regions lie at residues 186–230 (PQGF…STVK), 271–290 (PRQK…FGKR), and 383–428 (AGGA…SREL). A compositionally biased stretch (low complexity) spans 193–212 (GSGRSAPASRSGSRSQSRGP). Residue S194 is modified to Phosphoserine; by host. Residues 215–227 (RARSSSNQRQPAS) show a composition bias toward polar residues. In terms of domain architecture, CoV N CTD spans 260–383 (AKEVRQKILN…ENLNAYQNQA (124 aa)). Positions 267-384 (ILNKPRQKRT…NLNAYQNQAG (118 aa)) are dimerization. Residues S390 and S425 each carry the phosphoserine; by host modification. T429 bears the Phosphothreonine; by host mark.

Belongs to the betacoronavirus nucleocapsid protein family. As to quaternary structure, homooligomer. Both monomeric and oligomeric forms interact with RNA. Interacts with protein M. Interacts with NSP3; this interaction serves to tether the genome to the newly translated replicase-transcriptase complex at a very early stage of infection. ADP-ribosylated. The ADP-ribosylation is retained in the virion during infection. In terms of processing, phosphorylated on serine and threonine residues.

The protein resides in the virion. It is found in the host endoplasmic reticulum-Golgi intermediate compartment. Its subcellular location is the host Golgi apparatus. Its function is as follows. Packages the positive strand viral genome RNA into a helical ribonucleocapsid (RNP) and plays a fundamental role during virion assembly through its interactions with the viral genome and membrane protein M. Plays an important role in enhancing the efficiency of subgenomic viral RNA transcription as well as viral replication. The protein is Nucleoprotein of Rattus norvegicus (Rat).